Reading from the N-terminus, the 67-residue chain is Prokaryotic ubiquitin-like protein Pup (67 aa).

Positions 1–26 (MATKETGGQKHATRRNQEVEEIEVTT) are disordered. The tract at residues 23–61 (EVTTETSVRNEKLAEDVDDILDEIDEVLESNAEDFVRQF) is ARC ATPase binding. Residues 27–55 (ETSVRNEKLAEDVDDILDEIDEVLESNAE) adopt a coiled-coil conformation. Residue glutamate 67 forms an Isoglutamyl lysine isopeptide (Glu-Lys) (interchain with K-? in acceptor proteins) linkage.

This sequence belongs to the prokaryotic ubiquitin-like protein family. Strongly interacts with the proteasome-associated ATPase ARC through a hydrophobic interface; the interacting region of Pup lies in its C-terminal half. There is one Pup binding site per ARC hexamer ring.

Its pathway is protein degradation; proteasomal Pup-dependent pathway. Its function is as follows. Protein modifier that is covalently attached to lysine residues of substrate proteins, thereby targeting them for proteasomal degradation. The tagging system is termed pupylation. The protein is Prokaryotic ubiquitin-like protein Pup of Thermobifida fusca (strain YX).